A 93-amino-acid polypeptide reads, in one-letter code: MQVTDVRIRRVTAEGKMKAIVSVTFDDEFVVHDIKIIEGQNGLFIAMPSRKMGEGDFRDIAHPINSSTRTKLQDAIFAEYEKMSDMEEEAANE.

It belongs to the SpoVG family.

Functionally, could be involved in septation. The chain is Putative septation protein SpoVG from Alkaliphilus oremlandii (strain OhILAs) (Clostridium oremlandii (strain OhILAs)).